We begin with the raw amino-acid sequence, 294 residues long: Ventral anterior homeobox 2b (294 aa).

Residues 1–10 (MGDGVSEERS) are compositionally biased toward basic and acidic residues. Disordered regions lie at residues 1–27 (MGDG…VRDR), 43–65 (KDIP…DSQS), 149–168 (RRTK…SSST), 190–223 (PAPP…PVIS), and 272–294 (SSAF…KSTS). Positions 98-157 (PKRTRTSFTAEQLYRLELEFQRCQYVVGRERTELARQLNLSETQVKVWFQNRRTKQKKDQ) form a DNA-binding region, homeobox. Positions 154–165 (KKDQSRDSEKRS) are enriched in basic and acidic residues. Over residues 197-219 (SSQNNMGTSSGNGTSLGTSGSTS) the composition is skewed to low complexity. Basic and acidic residues predominate over residues 279–288 (TRLDRKDTAS).

The protein belongs to the EMX homeobox family.

The protein localises to the nucleus. Its function is as follows. Transcription factor that may function in dorsoventral specification of the forebrain. Regulates the expression of Wnt signaling antagonists. The polypeptide is Ventral anterior homeobox 2b (vax2-b) (Xenopus laevis (African clawed frog)).